A 335-amino-acid polypeptide reads, in one-letter code: Cell division protein ZipA (335 aa).

Residues 1–4 are Periplasmic-facing; it reads MDLN. The chain crosses the membrane as a helical span at residues 5 to 25; it reads AILIILGVIALIILVAHGIWS. Topologically, residues 26 to 335 are cytoplasmic; it reads NRREKSQYFE…AERDYLARVS (310 aa).

The protein belongs to the ZipA family. As to quaternary structure, interacts with FtsZ via their C-terminal domains.

It is found in the cell inner membrane. Functionally, essential cell division protein that stabilizes the FtsZ protofilaments by cross-linking them and that serves as a cytoplasmic membrane anchor for the Z ring. Also required for the recruitment to the septal ring of downstream cell division proteins. The chain is Cell division protein ZipA from Histophilus somni (strain 2336) (Haemophilus somnus).